Consider the following 305-residue polypeptide: Olfactory receptor 9G9 (305 aa).

Topologically, residues 1–27 (MQRSNHTVTEFILLGFTTDPGMQLGLF) are extracellular. N-linked (GlcNAc...) asparagine glycosylation occurs at Asn5. The chain crosses the membrane as a helical span at residues 28–48 (VVFLGVYSLTVVGNSTLIVLI). Topologically, residues 49-64 (CNDSHLHTPMYFVVGN) are cytoplasmic. The helical transmembrane segment at 65-85 (LSFLDLWYSSVYTPKILVICI) threads the bilayer. Residues 86 to 96 (SEDKSISFAGC) lie on the Extracellular side of the membrane. Cys96 and Cys178 are disulfide-bonded. A helical transmembrane segment spans residues 97 to 117 (LCQFFFSAGLAYSECCLLAAM). Over 118 to 138 (AYDRYVAISKPLLYAQAMSIK) the chain is Cytoplasmic. Residues 139 to 159 (LCALLVAVSYCGGFINSSIIT) form a helical membrane-spanning segment. Residues 160-200 (KKTFSFNFCCENIIDDFFCDLLPLVKLACGEKGCYKFLMYF) lie on the Extracellular side of the membrane. Residues 201 to 221 (LLASNVICPAVLILASYLFII) traverse the membrane as a helical segment. Residues 222–239 (TSVLRISSSQGRLKAFST) lie on the Cytoplasmic side of the membrane. A helical transmembrane segment spans residues 240 to 260 (CSSHLTSVTLYYGSILYIYAL). The Extracellular portion of the chain corresponds to 261–271 (PRSSYSFDMDK). Residues 272–291 (IVSTFYTEVLPMLNPMIYSL) form a helical membrane-spanning segment. At 292–305 (RNKDVKEALKKLLP) the chain is on the cytoplasmic side.

The protein belongs to the G-protein coupled receptor 1 family.

The protein resides in the cell membrane. Its function is as follows. Odorant receptor. This chain is Olfactory receptor 9G9 (OR9G9), found in Homo sapiens (Human).